The chain runs to 504 residues: ATP synthase subunit alpha (504 aa).

169–176 (GDRQTGKT) contributes to the ATP binding site.

It belongs to the ATPase alpha/beta chains family. As to quaternary structure, F-type ATPases have 2 components, CF(1) - the catalytic core - and CF(0) - the membrane proton channel. CF(1) has five subunits: alpha(3), beta(3), gamma(1), delta(1), epsilon(1). CF(0) has three main subunits: a(1), b(2) and c(9-12). The alpha and beta chains form an alternating ring which encloses part of the gamma chain. CF(1) is attached to CF(0) by a central stalk formed by the gamma and epsilon chains, while a peripheral stalk is formed by the delta and b chains.

The protein resides in the cell membrane. It catalyses the reaction ATP + H2O + 4 H(+)(in) = ADP + phosphate + 5 H(+)(out). Produces ATP from ADP in the presence of a proton gradient across the membrane. The alpha chain is a regulatory subunit. The protein is ATP synthase subunit alpha of Clostridium botulinum (strain Langeland / NCTC 10281 / Type F).